The sequence spans 280 residues: Acetyl-coenzyme A carboxylase carboxyl transferase subunit beta (280 aa).

Positions 24–280 constitute a CoA carboxyltransferase N-terminal domain; the sequence is AWIKCDKCKN…IYTLIRHTHG (257 aa). Zn(2+)-binding residues include Cys28, Cys31, Cys47, and Cys50. The segment at 28–50 adopts a C4-type zinc-finger fold; it reads CDKCKNILYIEDLLKNLKICPHC.

This sequence belongs to the AccD/PCCB family. As to quaternary structure, acetyl-CoA carboxylase is a heterohexamer composed of biotin carboxyl carrier protein (AccB), biotin carboxylase (AccC) and two subunits each of ACCase subunit alpha (AccA) and ACCase subunit beta (AccD). The cofactor is Zn(2+).

The protein localises to the cytoplasm. It catalyses the reaction N(6)-carboxybiotinyl-L-lysyl-[protein] + acetyl-CoA = N(6)-biotinyl-L-lysyl-[protein] + malonyl-CoA. Its pathway is lipid metabolism; malonyl-CoA biosynthesis; malonyl-CoA from acetyl-CoA: step 1/1. In terms of biological role, component of the acetyl coenzyme A carboxylase (ACC) complex. Biotin carboxylase (BC) catalyzes the carboxylation of biotin on its carrier protein (BCCP) and then the CO(2) group is transferred by the transcarboxylase to acetyl-CoA to form malonyl-CoA. The sequence is that of Acetyl-coenzyme A carboxylase carboxyl transferase subunit beta from Sulfurihydrogenibium sp. (strain YO3AOP1).